Reading from the N-terminus, the 128-residue chain is Methylglyoxal synthase (128 aa).

Positions 1–128 constitute an MGS-like domain; it reads MRIALIAHDR…MQDHPGNRQA (128 aa). Residues histidine 8, lysine 12, 34-37, and 54-55 contribute to the substrate site; these read TGTT and SG. The Proton donor/acceptor role is filled by aspartate 60. Histidine 87 contributes to the substrate binding site.

The protein belongs to the methylglyoxal synthase family.

The enzyme catalyses dihydroxyacetone phosphate = methylglyoxal + phosphate. Functionally, catalyzes the formation of methylglyoxal from dihydroxyacetone phosphate. In Moorella thermoacetica (strain ATCC 39073 / JCM 9320), this protein is Methylglyoxal synthase.